Consider the following 48-residue polypeptide: Sperm protamine P1 (48 aa).

This sequence belongs to the protamine P1 family. As to expression, testis.

It is found in the nucleus. Its subcellular location is the chromosome. Functionally, protamines substitute for histones in the chromatin of sperm during the haploid phase of spermatogenesis. They compact sperm DNA into a highly condensed, stable and inactive complex. The sequence is that of Sperm protamine P1 (PRM1) from Murina cyclotis (Round-eared tube-nosed bat).